Reading from the N-terminus, the 255-residue chain is Imidazole glycerol phosphate synthase subunit HisF (255 aa).

Residues D12 and D131 contribute to the active site.

It belongs to the HisA/HisF family. As to quaternary structure, heterodimer of HisH and HisF.

Its subcellular location is the cytoplasm. It catalyses the reaction 5-[(5-phospho-1-deoxy-D-ribulos-1-ylimino)methylamino]-1-(5-phospho-beta-D-ribosyl)imidazole-4-carboxamide + L-glutamine = D-erythro-1-(imidazol-4-yl)glycerol 3-phosphate + 5-amino-1-(5-phospho-beta-D-ribosyl)imidazole-4-carboxamide + L-glutamate + H(+). The protein operates within amino-acid biosynthesis; L-histidine biosynthesis; L-histidine from 5-phospho-alpha-D-ribose 1-diphosphate: step 5/9. Functionally, IGPS catalyzes the conversion of PRFAR and glutamine to IGP, AICAR and glutamate. The HisF subunit catalyzes the cyclization activity that produces IGP and AICAR from PRFAR using the ammonia provided by the HisH subunit. The polypeptide is Imidazole glycerol phosphate synthase subunit HisF (Ruthia magnifica subsp. Calyptogena magnifica).